A 34-amino-acid chain; its full sequence is Conotoxin Cl6d (34 aa).

3 disulfide bridges follow: Cys-4–Cys-19, Cys-12–Cys-29, and Cys-18–Cys-33. A 4-hydroxyproline mark is found at Pro-14 and Pro-21.

In terms of tissue distribution, expressed by the venom duct.

Its subcellular location is the secreted. This chain is Conotoxin Cl6d, found in Californiconus californicus (California cone).